A 762-amino-acid chain; its full sequence is Serine/threonine-protein kinase PLK4 (762 aa).

Residues 14–268 (YEVQHLLGKG…LEQVLRHPFM (255 aa)) enclose the Protein kinase domain. ATP-binding positions include 20–28 (LGKGGFACV) and Lys43. Asp139 acts as the Proton acceptor in catalysis. The region spanning 383–498 (AECISMPPLN…ARFVSLVKSK (116 aa)) is the Cryptic POLO box 1 (CPB1) domain. The 104-residue stretch at 499-602 (TPKVTYFSGL…GRRPTPEVMP (104 aa)) folds into the Cryptic POLO box 2 (CPB2) domain. The POLO box domain maps to 657–736 (PIKRLNVPGV…LPQVQMKLKS (80 aa)).

The protein belongs to the protein kinase superfamily. Ser/Thr protein kinase family. CDC5/Polo subfamily. As to quaternary structure, homodimer. Ubiquitinated by the SCF(Slimb) ubiquitin ligase complex; leading to its degradation by the proteasome during interphase and regulating centriole number and ensuring the block to centriole reduplication.

The protein resides in the cytoplasm. Its subcellular location is the cytoskeleton. It localises to the microtubule organizing center. It is found in the centrosome. The protein localises to the centriole. The catalysed reaction is L-seryl-[protein] + ATP = O-phospho-L-seryl-[protein] + ADP + H(+). It catalyses the reaction L-threonyl-[protein] + ATP = O-phospho-L-threonyl-[protein] + ADP + H(+). Serine/threonine-protein kinase that plays a central role in centriole duplication. Able to trigger procentriole formation on the surface of the mother centriole cylinder, using mother centriole as a platform, leading to the recruitment of centriole biogenesis proteins such as sas-6. When overexpressed, it is able to induce centrosome amplification through the simultaneous generation of multiple procentrioles adjoining each parental centriole during S phase. Centrosome amplification following overexpression can initiate tumorigenesis, highlighting the importance of centrosome regulation in cancers. This chain is Serine/threonine-protein kinase PLK4 (SAK), found in Drosophila grimshawi (Hawaiian fruit fly).